We begin with the raw amino-acid sequence, 92 residues long: Protein AC152 (92 aa).

Acts as a transactivator of AC102 and HE65 genes. Therefore, participates in the global recruitment of G-actin to the host nucleus. The sequence is that of Protein AC152 (AC152) from Autographa californica nuclear polyhedrosis virus (AcMNPV).